Consider the following 291-residue polypeptide: Regulator of rDNA transcription protein 5 (291 aa).

Residues 21–104 (KRIYISNLDF…RTLKIKMYVP (84 aa)) enclose the RRM 1 domain. The disordered stretch occupies residues 109-151 (ARAERRKEKRKVPAPQAEENPDAAPQDAQQPQPPAPAEEPTSK). An RRM 2 domain is found at 152 to 235 (DTVYCAYLPS…KKITLRPARL (84 aa)). A disordered region spans residues 271 to 291 (HRQQEAEIPAAETPDDVAATA).

It belongs to the RRT5 family.

Functionally, may be involved in the modulation of rDNA transcription. The sequence is that of Regulator of rDNA transcription protein 5 (RRT5) from Lachancea thermotolerans (strain ATCC 56472 / CBS 6340 / NRRL Y-8284) (Yeast).